The chain runs to 130 residues: Small ribosomal subunit protein uS9 (130 aa).

The protein belongs to the universal ribosomal protein uS9 family.

The sequence is that of Small ribosomal subunit protein uS9 from Xylella fastidiosa (strain 9a5c).